A 284-amino-acid polypeptide reads, in one-letter code: Tropomyosin Pen a 1.0102 (284 aa).

Positions 1 to 51 (MDAIKKKMQAMKLEKDNAMDRADTLEQQNKEANNRAEKSEEEVHNLQKRMQ) are disordered. Positions 1-273 (MDAIKKKMQA…KEKYKSITDE (273 aa)) form a coiled coil. Over residues 12–45 (KLEKDNAMDRADTLEQQNKEANNRAEKSEEEVHN) the composition is skewed to basic and acidic residues. IgE-binding stretches follow at residues 43-57 (VHNL…ENDL), 85-105 (VAAL…SEER), 133-153 (RSLS…EARF), 187-202 (ESKI…VVGN), 247-284 (QKLQ…LSGY), 249-260 (LQKEVDRLEDEL), and 266-281 (KYKS…FSEL).

This sequence belongs to the tropomyosin family. In terms of assembly, homodimer.

In terms of biological role, tropomyosin, in association with the troponin complex, plays a central role in the calcium dependent regulation of muscle contraction. This is Tropomyosin Pen a 1.0102 from Penaeus aztecus (Brown shrimp).